The sequence spans 1021 residues: Translation initiation factor IF-2 (1021 aa).

The segment at 50 to 422 is disordered; the sequence is AFPAEGGSAS…RMGAMVPRGN (373 aa). Over residues 57-71 the composition is skewed to gly residues; it reads SASGGRPGGRPGPGN. Residues 75–95 show a composition bias toward pro residues; the sequence is PAPPRPGLAPRPGPRPVPGRP. The segment covering 96–112 has biased composition (low complexity); it reads GPAARPGGPAAPSAPAA. Over residues 113 to 129 the composition is skewed to pro residues; the sequence is PSAPAPGAPAASPPASQ. 3 stretches are compositionally biased toward low complexity: residues 130-159, 167-178, and 187-196; these read PRPI…ASGP, GGPAAPGRARPG, and SAPSAPSAGG. Pro residues predominate over residues 198 to 208; sequence RPGPRPGPRPS. A compositionally biased stretch (low complexity) spans 219-233; it reads SAGPRQSAGQSGSGP. Pro residues-rich tracts occupy residues 234–254 and 262–273; these read ASPP…PRPG and RPSPGSMPPRPG. Gly residues-rich tracts occupy residues 275–291 and 306–389; these read RPGG…GSGG and GAPG…GGRG. The span at 390–401 shows a compositional bias: basic residues; the sequence is RPGRQRKSKRAK. Residues 514–686 form the tr-type G domain; the sequence is IRPPVVTVMG…IILTADASLD (173 aa). The G1 stretch occupies residues 523-530; sequence GHVDHGKT. Position 523–530 (523–530) interacts with GTP; the sequence is GHVDHGKT. A G2 region spans residues 548–552; that stretch reads GITQH. The interval 573 to 576 is G3; that stretch reads DTPG. Residues 573 to 577 and 627 to 630 contribute to the GTP site; these read DTPGH and NKVD. The interval 627–630 is G4; the sequence is NKVD. Residues 663 to 665 form a G5 region; it reads SAR.

This sequence belongs to the TRAFAC class translation factor GTPase superfamily. Classic translation factor GTPase family. IF-2 subfamily.

It localises to the cytoplasm. In terms of biological role, one of the essential components for the initiation of protein synthesis. Protects formylmethionyl-tRNA from spontaneous hydrolysis and promotes its binding to the 30S ribosomal subunits. Also involved in the hydrolysis of GTP during the formation of the 70S ribosomal complex. This is Translation initiation factor IF-2 from Frankia alni (strain DSM 45986 / CECT 9034 / ACN14a).